A 456-amino-acid polypeptide reads, in one-letter code: Adenylosuccinate synthetase isozyme 2 (456 aa).

The segment covering 1–14 (MSISESSPAATSLP) has biased composition (polar residues). Positions 1–24 (MSISESSPAATSLPNGDCGRPRAR) are disordered. Residues 39–45 (GDEGKGK) and 67–69 (GHT) each bind GTP. Aspartate 40 (proton acceptor) is an active-site residue. The Mg(2+) site is built by aspartate 40 and glycine 67. A substrate-binding site is contributed by aspartate 40. IMP-binding positions include 40-43 (DEGK), 65-68 (NAGH), threonine 162, arginine 176, asparagine 255, threonine 270, and arginine 334. Catalysis depends on histidine 68, which acts as the Proton donor. Position 330–336 (330–336 (VTTGRKR)) interacts with substrate. GTP is bound by residues arginine 336, 362–364 (KLD), and 444–447 (GVGK).

The protein belongs to the adenylosuccinate synthetase family. In terms of assembly, homodimer. Mg(2+) is required as a cofactor.

It localises to the cytoplasm. The protein localises to the mitochondrion. The catalysed reaction is IMP + L-aspartate + GTP = N(6)-(1,2-dicarboxyethyl)-AMP + GDP + phosphate + 2 H(+). It participates in purine metabolism; AMP biosynthesis via de novo pathway; AMP from IMP: step 1/2. Its activity is regulated as follows. Inhibited competitively by AMP and IMP and non-competitively by fructose 1,6-bisphosphate. Functionally, plays an important role in the de novo pathway and in the salvage pathway of purine nucleotide biosynthesis. Catalyzes the first committed step in the biosynthesis of AMP from IMP. The polypeptide is Adenylosuccinate synthetase isozyme 2 (Adss2) (Mus musculus (Mouse)).